We begin with the raw amino-acid sequence, 299 residues long: NAD kinase 1 (299 aa).

The active-site Proton acceptor is D62. Residues 62 to 63, K67, 143 to 144, K173, and D175 each bind NAD(+); these read DG and ND.

It belongs to the NAD kinase family. Requires a divalent metal cation as cofactor.

The protein resides in the cytoplasm. It carries out the reaction NAD(+) + ATP = ADP + NADP(+) + H(+). Functionally, involved in the regulation of the intracellular balance of NAD and NADP, and is a key enzyme in the biosynthesis of NADP. Catalyzes specifically the phosphorylation on 2'-hydroxyl of the adenosine moiety of NAD to yield NADP. The protein is NAD kinase 1 of Prochlorococcus marinus subsp. pastoris (strain CCMP1986 / NIES-2087 / MED4).